The sequence spans 594 residues: UvrABC system protein C (594 aa).

The GIY-YIG domain maps to 13–99 (NSSGVYQYFD…IKQLKPKYNI (87 aa)). Residues 205-240 (DRLIKELELKMERLSSKLRFEEALIYRDRIAKIQKI) form the UVR domain.

The protein belongs to the UvrC family. In terms of assembly, interacts with UvrB in an incision complex.

It is found in the cytoplasm. Functionally, the UvrABC repair system catalyzes the recognition and processing of DNA lesions. UvrC both incises the 5' and 3' sides of the lesion. The N-terminal half is responsible for the 3' incision and the C-terminal half is responsible for the 5' incision. This chain is UvrABC system protein C, found in Helicobacter pylori (strain P12).